Here is a 556-residue protein sequence, read N- to C-terminus: 2-succinyl-5-enolpyruvyl-6-hydroxy-3-cyclohexene-1-carboxylate synthase (556 aa).

This sequence belongs to the TPP enzyme family. MenD subfamily. In terms of assembly, homodimer. Mg(2+) serves as cofactor. It depends on Mn(2+) as a cofactor. Requires thiamine diphosphate as cofactor.

It carries out the reaction isochorismate + 2-oxoglutarate + H(+) = 5-enolpyruvoyl-6-hydroxy-2-succinyl-cyclohex-3-ene-1-carboxylate + CO2. The protein operates within quinol/quinone metabolism; 1,4-dihydroxy-2-naphthoate biosynthesis; 1,4-dihydroxy-2-naphthoate from chorismate: step 2/7. It participates in quinol/quinone metabolism; menaquinone biosynthesis. Its function is as follows. Catalyzes the thiamine diphosphate-dependent decarboxylation of 2-oxoglutarate and the subsequent addition of the resulting succinic semialdehyde-thiamine pyrophosphate anion to isochorismate to yield 2-succinyl-5-enolpyruvyl-6-hydroxy-3-cyclohexene-1-carboxylate (SEPHCHC). The sequence is that of 2-succinyl-5-enolpyruvyl-6-hydroxy-3-cyclohexene-1-carboxylate synthase from Salmonella paratyphi B (strain ATCC BAA-1250 / SPB7).